The following is a 907-amino-acid chain: Translation initiation factor IF-2 (907 aa).

The interval 26-317 is disordered; that stretch reads DAGMKKSSSD…KPKSMQHGFD (292 aa). Composition is skewed to basic and acidic residues over residues 28–44 and 101–248; these read GMKK…EKQK and SAIE…DTDY. The span at 299–308 shows a compositional bias: basic residues; that stretch reads KGGRKGKLSK. A tr-type G domain is found at 406 to 575; the sequence is PRAPVVTIMG…LLQAEVLELT (170 aa). Residues 415–422 form a G1 region; it reads GHVDHGKT. 415–422 contacts GTP; the sequence is GHVDHGKT. The tract at residues 440 to 444 is G2; that stretch reads GITQH. Residues 461-464 are G3; the sequence is DTPG. GTP is bound by residues 461-465 and 515-518; these read DTPGH and NKID. The interval 515–518 is G4; it reads NKID. The G5 stretch occupies residues 551–553; the sequence is SAK.

This sequence belongs to the TRAFAC class translation factor GTPase superfamily. Classic translation factor GTPase family. IF-2 subfamily.

Its subcellular location is the cytoplasm. Its function is as follows. One of the essential components for the initiation of protein synthesis. Protects formylmethionyl-tRNA from spontaneous hydrolysis and promotes its binding to the 30S ribosomal subunits. Also involved in the hydrolysis of GTP during the formation of the 70S ribosomal complex. The chain is Translation initiation factor IF-2 from Vibrio vulnificus (strain YJ016).